The primary structure comprises 468 residues: Putative ankyrin repeat protein R873 (468 aa).

14 ANK repeats span residues isoleucine 38 to leucine 68, serine 78 to glycine 107, aspartate 109 to alanine 137, asparagine 138 to serine 167, asparagine 169 to threonine 197, asparagine 198 to serine 227, aspartate 229 to alanine 257, glutamate 258 to serine 287, tyrosine 289 to aspartate 316, cysteine 317 to glutamate 346, aspartate 348 to valine 376, aspartate 378 to alanine 406, glutamate 407 to alanine 436, and asparagine 438 to lysine 466.

The polypeptide is Putative ankyrin repeat protein R873 (Acanthamoeba polyphaga mimivirus (APMV)).